The sequence spans 201 residues: Phosphatidylglycerophosphatase and protein-tyrosine phosphatase 1 (201 aa).

A mitochondrion-targeting transit peptide spans 1 to 27 (MAATALLEAGLARVLFYPTLLYTLFRG). Positions 37 to 188 (WYHRIDPTVL…LKEFHKQITA (152 aa)) constitute a Tyrosine-protein phosphatase domain. The active-site Phosphocysteine intermediate is the Cys-132.

It belongs to the protein-tyrosine phosphatase family. Non-receptor class dual specificity subfamily. In terms of assembly, interacts with STYXL1; the interaction inhibits PTPMT1 catalytic activity.

It is found in the mitochondrion inner membrane. The enzyme catalyses a 1,2-diacyl-sn-glycero-3-phospho-(1'-sn-glycero-3'-phosphate) + H2O = a 1,2-diacyl-sn-glycero-3-phospho-(1'-sn-glycerol) + phosphate. The catalysed reaction is O-phospho-L-tyrosyl-[protein] + H2O = L-tyrosyl-[protein] + phosphate. It catalyses the reaction O-phospho-L-seryl-[protein] + H2O = L-seryl-[protein] + phosphate. It carries out the reaction O-phospho-L-threonyl-[protein] + H2O = L-threonyl-[protein] + phosphate. The enzyme catalyses 1,2-di-(9Z-octadecenoyl)-sn-glycero-3-phospho-(1'-sn-glycerol-3'-phosphate) + H2O = 1,2-di-(9Z-octadecenoyl)-sn-glycero-3-phospho-(1'-sn-glycerol) + phosphate. The catalysed reaction is 1,2-dioctanoyl-sn-glycero-3-phospho-(1D-myo-inositol-5-phosphate) + H2O = 1,2-dioctanoyl-sn-glycero-3-phospho-(1D-myo-inositol) + phosphate. It catalyses the reaction a 1-acyl-2-hexanoyl-sn-glycero-3-phospho-(1D-myo-inositol-5-phosphate) + H2O = a 1-acyl-2-hexanoyl-sn-glycero-3-phospho-(1D-myo-inositol) + phosphate. It carries out the reaction 1,2-dibutyryl-sn-glycero-3-phospho-(1D-myo-inositol-5-phosphate) + H2O = 1,2-dibutyryl-sn-glycero-3-phospho-(1D-myo-inositol) + phosphate. It functions in the pathway phospholipid metabolism; phosphatidylglycerol biosynthesis; phosphatidylglycerol from CDP-diacylglycerol: step 2/2. In terms of biological role, lipid phosphatase which dephosphorylates phosphatidylglycerophosphate (PGP) to phosphatidylglycerol (PG). PGP is an essential intermediate in the biosynthetic pathway of cardiolipin, a mitochondrial-specific phospholipid regulating the membrane integrity and activities of the organelle. Has also been shown to display phosphatase activity toward phosphoprotein substrates, specifically mediates dephosphorylation of mitochondrial proteins, thereby playing an essential role in ATP production. Has probably a preference for proteins phosphorylated on Ser and/or Thr residues compared to proteins phosphorylated on Tyr residues. Probably involved in regulation of insulin secretion in pancreatic beta cells. May prevent intrinsic apoptosis, probably by regulating mitochondrial membrane integrity. The chain is Phosphatidylglycerophosphatase and protein-tyrosine phosphatase 1 from Homo sapiens (Human).